The chain runs to 177 residues: Ribulose bisphosphate carboxylase small subunit, chloroplastic 3 (177 aa).

The N-terminal 56 residues, 1–56 (MASSMMASTAAAVARAGPAQSSMVPFNACRSSVPFPATRKANNNLSTLPGNGGRVS), are a transit peptide targeting the chloroplast.

The protein belongs to the RuBisCO small chain family. As to quaternary structure, heterohexadecamer of 8 large and 8 small subunits.

The protein localises to the plastid. The protein resides in the chloroplast. RuBisCO catalyzes two reactions: the carboxylation of D-ribulose 1,5-bisphosphate, the primary event in carbon dioxide fixation, as well as the oxidative fragmentation of the pentose substrate. Both reactions occur simultaneously and in competition at the same active site. Although the small subunit is not catalytic it is essential for maximal activity. In Lemna gibba (Swollen duckweed), this protein is Ribulose bisphosphate carboxylase small subunit, chloroplastic 3.